A 416-amino-acid chain; its full sequence is Homogentisate 1,2-dioxygenase (416 aa).

The Proton acceptor role is filled by His-275. His-318 and Glu-324 together coordinate Fe cation. Positions 333 and 354 each coordinate homogentisate. Residue His-354 coordinates Fe cation.

Belongs to the homogentisate dioxygenase family. In terms of assembly, hexamer; dimer of trimers. Fe cation serves as cofactor.

It carries out the reaction homogentisate + O2 = 4-maleylacetoacetate + H(+). It functions in the pathway amino-acid degradation; L-phenylalanine degradation; acetoacetate and fumarate from L-phenylalanine: step 4/6. Functionally, involved in the catabolism of homogentisate (2,5-dihydroxyphenylacetate or 2,5-OH-PhAc), a central intermediate in the degradation of phenylalanine and tyrosine. Catalyzes the oxidative ring cleavage of the aromatic ring of homogentisate to yield maleylacetoacetate. This Legionella pneumophila subsp. pneumophila (strain Philadelphia 1 / ATCC 33152 / DSM 7513) protein is Homogentisate 1,2-dioxygenase.